The primary structure comprises 902 residues: Calcium-activated chloride channel regulator 3A-1 (902 aa).

Positions 1–21 are cleaved as a signal peptide; sequence MVPGLQVLLFLTLHLLQNTES. The segment at 45-199 is metalloprotease domain; the sequence is DERLIPSIKE…RITGTNVVHN (155 aa). The N-linked (GlcNAc...) asparagine glycan is linked to Asn75. His155 is a binding site for Zn(2+). The active site involves Glu156. Residues His159 and Asp166 each coordinate Zn(2+). The region spanning 308 to 476 is the VWFA domain; that stretch reads VVCLVLDKSG…NSLIDAFSRI (169 aa). N-linked (GlcNAc...) asparagine glycans are attached at residues Asn504, Asn515, Asn630, Asn687, Asn697, Asn809, and Asn814.

Belongs to the CLCR family. As to quaternary structure, part of a complex composed of complement component C3, CLCA1/CLCA3, A2ML1/OH and ALB/serum albumin. Post-translationally, glycosylated. The 130-kDa product is autoproteolytically processed by the metalloprotease domain and yields two subunits, a 90-kDa protein and a group of 32- to 38-kDa proteins. The cleavage is necessary for calcium-activated chloride channel (CaCC) activation activity. In terms of tissue distribution, highly expressed in skin and spleen, and at lower levels in kidney and liver. Also detected in lung and brain. Not detected in lung or brain. In lung, localizes to respiratory epithelia of the bronchi and trachea and the submucosal glands.

Its subcellular location is the cell membrane. Its function is as follows. Plays a role in modulating chloride current across the plasma membrane in a calcium-dependent manner. This Mus musculus (Mouse) protein is Calcium-activated chloride channel regulator 3A-1.